A 365-amino-acid polypeptide reads, in one-letter code: Putrescine carbamoyltransferase (365 aa).

Carbamoyl phosphate-binding positions include 54–58 (STRTR), arginine 105, and histidine 132. Position 277-280 (277-280 (HCLP)) interacts with putrescine.

The protein belongs to the aspartate/ornithine carbamoyltransferase superfamily. PTCase family. Homotrimer.

The protein localises to the cytoplasm. It catalyses the reaction carbamoyl phosphate + putrescine = N-carbamoylputrescine + phosphate + H(+). It participates in amine and polyamine biosynthesis; putrescine biosynthesis via agmatine pathway; putrescine from N-carbamoylputrescine (transferase route): step 1/1. Catalyzes the phosphorolysis of N-carbamoylputrescine to form carbamoyl phosphate and putrescine. Is involved in the degradation pathway of the polyamine agmatine. In Mycoplasma capricolum subsp. capricolum (strain California kid / ATCC 27343 / NCTC 10154), this protein is Putrescine carbamoyltransferase.